The sequence spans 1546 residues: Hybrid signal transduction histidine kinase D (1546 aa).

Residues 36-63 (MRKQKPDHEKTREELIEEINHLRAVSNS) adopt a coiled-coil conformation. In terms of domain architecture, PAS spans 65–131 (KNARIMLDEM…NIDNVREAVH (67 aa)). In terms of domain architecture, PAC spans 139–193 (IRYETEIFGKSAGTEKITIDFSLMPLFNDKGEVSLILPEGRNITEKRLGELEIER). Positions 218–440 (NVSHELRTPL…QFTLRLPLTP (223 aa)) constitute a Histidine kinase 1 domain. Position 221 is a phosphohistidine; by autocatalysis (His221). Residues 571–686 (IVLVVEDNPE…ELVARVVNLM (116 aa)) form the Response regulatory 1 domain. A 4-aspartylphosphate modification is found at Asp619. Positions 747–1010 (NLSHELRTPL…QFTVVLPIIK (264 aa)) constitute a Histidine kinase 2 domain. The residue at position 750 (His750) is a Phosphohistidine; by autocatalysis. 2 stretches are compositionally biased toward low complexity: residues 1013–1031 (SSSNSSPSNQLSCSSSPPL) and 1042–1146 (NYIN…SNNN). Disordered regions lie at residues 1013–1148 (SSSN…NNEK), 1266–1285 (NNSNNDDNSNNTTIPTPPSS), and 1313–1350 (PLSELKSSSNNNNNNNNNSNNNNNNSMSPNLRSPKANS). Positions 1313 to 1346 (PLSELKSSSNNNNNNNNNSNNNNNNSMSPNLRSP) are enriched in low complexity. A Response regulatory 2 domain is found at 1359–1483 (QIMLVDDLEE…ELSNSILTLI (125 aa)). Asp1412 bears the 4-aspartylphosphate mark. A disordered region spans residues 1500–1546 (QNNNNNNNNNNNNNNNNNNNNNNINNGNDDDSLLLTDSRPCKKANSQ). Residues 1501-1526 (NNNNNNNNNNNNNNNNNNNNNNINNG) show a composition bias toward low complexity.

It carries out the reaction ATP + protein L-histidine = ADP + protein N-phospho-L-histidine.. Acts as a receptor histidine kinase for a signal transduction pathway. This protein undergoes an ATP-dependent autophosphorylation at a conserved histidine residue in the kinase core, and a phosphoryl group is then transferred to a conserved aspartate residue in the receiver domain. The polypeptide is Hybrid signal transduction histidine kinase D (dhkD) (Dictyostelium discoideum (Social amoeba)).